Here is a 933-residue protein sequence, read N- to C-terminus: uncharacterized protein (933 aa).

The segment covering 244–255 has biased composition (basic and acidic residues); the sequence is KKDIGAKPKPVD. Disordered stretches follow at residues 244-277 and 343-364; these read KKDIGAKPKPVDDVSPQPVRARTPPENTVVELPD and SAPHQPSSQHAQMGRHSQEWKG. Polar residues predominate over residues 343–353; the sequence is SAPHQPSSQHA. The chain crosses the membrane as a helical span at residues 771–791; sequence VIHGMVLMFAGGKLLFGGCVL. Residues 890-907 show a composition bias toward basic and acidic residues; sequence DKIEKEPPPSPEKVKPPE. Residues 890 to 933 are disordered; it reads DKIEKEPPPSPEKVKPPEIELQPFTKMRRSSKKTAGFKKLNSKK. Residues 915 to 933 are compositionally biased toward basic residues; sequence KMRRSSKKTAGFKKLNSKK.

Its subcellular location is the membrane. This is an uncharacterized protein from Mus musculus (Mouse).